A 187-amino-acid chain; its full sequence is Ribose 1,5-bisphosphate phosphokinase PhnN (187 aa).

9–16 contacts ATP; sequence GPSGSGKD.

This sequence belongs to the ribose 1,5-bisphosphokinase family.

The enzyme catalyses alpha-D-ribose 1,5-bisphosphate + ATP = 5-phospho-alpha-D-ribose 1-diphosphate + ADP. It functions in the pathway metabolic intermediate biosynthesis; 5-phospho-alpha-D-ribose 1-diphosphate biosynthesis; 5-phospho-alpha-D-ribose 1-diphosphate from D-ribose 5-phosphate (route II): step 3/3. Its function is as follows. Catalyzes the phosphorylation of ribose 1,5-bisphosphate to 5-phospho-D-ribosyl alpha-1-diphosphate (PRPP). The polypeptide is Ribose 1,5-bisphosphate phosphokinase PhnN (Desulfomicrobium baculatum (strain DSM 4028 / VKM B-1378 / X) (Desulfovibrio baculatus)).